We begin with the raw amino-acid sequence, 261 residues long: tRNA pseudouridine synthase A (261 aa).

The Nucleophile role is filled by D51. Residue Y109 coordinates substrate.

It belongs to the tRNA pseudouridine synthase TruA family. In terms of assembly, homodimer.

It carries out the reaction uridine(38/39/40) in tRNA = pseudouridine(38/39/40) in tRNA. Functionally, formation of pseudouridine at positions 38, 39 and 40 in the anticodon stem and loop of transfer RNAs. The sequence is that of tRNA pseudouridine synthase A from Shewanella loihica (strain ATCC BAA-1088 / PV-4).